Here is a 142-residue protein sequence, read N- to C-terminus: Photosystem II extrinsic protein U (142 aa).

The N-terminal stretch at 1–28 (MKKIGLLLTIFSLCLGCLGLVPSDKAHA) is a signal peptide.

It belongs to the PsbU family. As to quaternary structure, PSII is composed of 1 copy each of membrane proteins PsbA, PsbB, PsbC, PsbD, PsbE, PsbF, PsbH, PsbI, PsbJ, PsbK, PsbL, PsbM, PsbT, PsbX, PsbY, PsbZ, Psb30/Ycf12, peripheral proteins PsbO, CyanoQ (PsbQ), PsbU, PsbV and a large number of cofactors. It forms dimeric complexes.

It is found in the cellular thylakoid membrane. In terms of biological role, one of the extrinsic, lumenal subunits of photosystem II (PSII). PSII is a light-driven water plastoquinone oxidoreductase, using light energy to abstract electrons from H(2)O, generating a proton gradient subsequently used for ATP formation. The extrinsic proteins stabilize the structure of photosystem II oxygen-evolving complex (OEC), the ion environment of oxygen evolution and protect the OEC against heat-induced inactivation. The chain is Photosystem II extrinsic protein U from Trichodesmium erythraeum (strain IMS101).